Reading from the N-terminus, the 502-residue chain is Cytochrome P450 2J2 (502 aa).

C448 contacts heme.

It belongs to the cytochrome P450 family. Heme is required as a cofactor. As to expression, highly expressed in heart, present at lower levels in liver, kidney and skeletal muscle (at protein level).

The protein localises to the endoplasmic reticulum membrane. It is found in the microsome membrane. The catalysed reaction is (5Z,8Z,11Z,14Z)-eicosatetraenoate + reduced [NADPH--hemoprotein reductase] + O2 = 5,6-epoxy-(8Z,11Z,14Z)-eicosatrienoate + oxidized [NADPH--hemoprotein reductase] + H2O + H(+). It catalyses the reaction (5Z,8Z,11Z,14Z)-eicosatetraenoate + reduced [NADPH--hemoprotein reductase] + O2 = (8R,9S)-epoxy-(5Z,11Z,14Z)-eicosatrienoate + oxidized [NADPH--hemoprotein reductase] + H2O + H(+). It carries out the reaction (5Z,8Z,11Z,14Z)-eicosatetraenoate + reduced [NADPH--hemoprotein reductase] + O2 = (8S,9R)-epoxy-(5Z,11Z,14Z)-eicosatrienoate + oxidized [NADPH--hemoprotein reductase] + H2O + H(+). The enzyme catalyses (5Z,8Z,11Z,14Z)-eicosatetraenoate + reduced [NADPH--hemoprotein reductase] + O2 = (11R,12S)-epoxy-(5Z,8Z,14Z)-eicosatrienoate + oxidized [NADPH--hemoprotein reductase] + H2O + H(+). The catalysed reaction is (5Z,8Z,11Z,14Z)-eicosatetraenoate + reduced [NADPH--hemoprotein reductase] + O2 = (11S,12R)-epoxy-(5Z,8Z,14Z)-eicosatrienoate + oxidized [NADPH--hemoprotein reductase] + H2O + H(+). It catalyses the reaction (5Z,8Z,11Z,14Z)-eicosatetraenoate + reduced [NADPH--hemoprotein reductase] + O2 = (14R,15S)-epoxy-(5Z,8Z,11Z)-eicosatrienoate + oxidized [NADPH--hemoprotein reductase] + H2O + H(+). It carries out the reaction (5Z,8Z,11Z,14Z)-eicosatetraenoate + reduced [NADPH--hemoprotein reductase] + O2 = (14S,15R)-epoxy-(5Z,8Z,11Z)-eicosatrienoate + oxidized [NADPH--hemoprotein reductase] + H2O + H(+). The enzyme catalyses (15S)-hydroperoxy-(5Z,8Z,11Z,13E)-eicosatetraenoate = (13S)-hydroxy-(14S,15S)-epoxy-(5Z,8Z,11Z)-eicosatrienoate. The catalysed reaction is (15S)-hydroperoxy-(5Z,8Z,11Z,13E)-eicosatetraenoate = (13R)-hydroxy-(14S,15S)-epoxy-(5Z,8Z,11Z)-eicosatrienoate. It catalyses the reaction (5Z,8Z,11Z,14Z,17Z)-eicosapentaenoate + reduced [NADPH--hemoprotein reductase] + O2 = (17R,18S)-epoxy-(5Z,8Z,11Z,14Z)-eicosatetraenoate + oxidized [NADPH--hemoprotein reductase] + H2O + H(+). It carries out the reaction (5Z,8Z,11Z,14Z,17Z)-eicosapentaenoate + reduced [NADPH--hemoprotein reductase] + O2 = (17S,18R)-epoxy-(5Z,8Z,11Z,14Z)-eicosatetraenoate + oxidized [NADPH--hemoprotein reductase] + H2O + H(+). The enzyme catalyses (4Z,7Z,10Z,13Z,16Z,19Z)-docosahexaenoate + reduced [NADPH--hemoprotein reductase] + O2 = (19R,20S)-epoxy-(4Z,7Z,10Z,13Z,16Z)-docosapentaenoate + oxidized [NADPH--hemoprotein reductase] + H2O + H(+). The catalysed reaction is (4Z,7Z,10Z,13Z,16Z,19Z)-docosahexaenoate + reduced [NADPH--hemoprotein reductase] + O2 = (19S,20R)-epoxy-(4Z,7Z,10Z,13Z,16Z)-docosapentaenoate + oxidized [NADPH--hemoprotein reductase] + H2O + H(+). It catalyses the reaction albendazole + reduced [NADPH--hemoprotein reductase] + O2 = hydroxyalbendazole + oxidized [NADPH--hemoprotein reductase] + H2O + H(+). It carries out the reaction albendazole + reduced [NADPH--hemoprotein reductase] + O2 = albendazole S-oxide + oxidized [NADPH--hemoprotein reductase] + H2O + H(+). The enzyme catalyses fenbendazole + reduced [NADPH--hemoprotein reductase] + O2 = fenbendazole S-oxide + oxidized [NADPH--hemoprotein reductase] + H2O + H(+). It participates in lipid metabolism; arachidonate metabolism. Functionally, a cytochrome P450 monooxygenase involved in the metabolism of polyunsaturated fatty acids (PUFA) in the cardiovascular system. Mechanistically, uses molecular oxygen inserting one oxygen atom into a substrate, and reducing the second into a water molecule, with two electrons provided by NADPH via cytochrome P450 reductase (NADPH--hemoprotein reductase). Catalyzes the epoxidation of double bonds of PUFA. Converts arachidonic acid to four regioisomeric epoxyeicosatrienoic acids (EpETrE), likely playing a major role in the epoxidation of endogenous cardiac arachidonic acid pools. In endothelial cells, participates in eicosanoids metabolism by converting hydroperoxide species into hydroxy epoxy metabolites. In combination with 15-lipoxygenase metabolizes arachidonic acid and converts hydroperoxyicosatetraenoates (HpETEs) into hydroxy epoxy eicosatrienoates (HEETs), which are precursors of vasodilatory trihydroxyicosatrienoic acids (THETAs). This hydroperoxide isomerase activity is NADPH- and O2-independent. Catalyzes the monooxygenation of a various xenobiotics, such as danazol, amiodarone, terfenadine, astemizole, thioridazine, tamoxifen, cyclosporin A and nabumetone. Catalyzes hydroxylation of the anthelmintics albendazole and fenbendazole. Catalyzes the sulfoxidation of fenbedazole. The chain is Cytochrome P450 2J2 from Homo sapiens (Human).